Reading from the N-terminus, the 284-residue chain is 4-diphosphocytidyl-2-C-methyl-D-erythritol kinase (284 aa).

Residue K10 is part of the active site. 95-105 (PVAAGLGGGSS) is an ATP binding site. Residue D137 is part of the active site.

It belongs to the GHMP kinase family. IspE subfamily.

The enzyme catalyses 4-CDP-2-C-methyl-D-erythritol + ATP = 4-CDP-2-C-methyl-D-erythritol 2-phosphate + ADP + H(+). The protein operates within isoprenoid biosynthesis; isopentenyl diphosphate biosynthesis via DXP pathway; isopentenyl diphosphate from 1-deoxy-D-xylulose 5-phosphate: step 3/6. In terms of biological role, catalyzes the phosphorylation of the position 2 hydroxy group of 4-diphosphocytidyl-2C-methyl-D-erythritol. In Levilactobacillus brevis (strain ATCC 367 / BCRC 12310 / CIP 105137 / JCM 1170 / LMG 11437 / NCIMB 947 / NCTC 947) (Lactobacillus brevis), this protein is 4-diphosphocytidyl-2-C-methyl-D-erythritol kinase.